Here is a 481-residue protein sequence, read N- to C-terminus: MFVTAYLAFIVLAGLCVALEITARRLTLSQATQTAVANPAFQRFQKLFLKAYLLALWADWLQGPYLYKLYRHYNFLESQIAILYVCGLASCVLFAPVAGWLPQFLGRRQTCLLFCLAYSVCCITKLSQDYFMLILGRVLGGLSTSLLTTTFEAWYVHGHVDIHDFPKEWIPVTFGKVANWNYGLAVGAGLVANLFAEWLGLGPVAPFLLAIPSLAACAWFVLSEWGQEDKQEGMNGDKNAPLLNSLNTPKLQLSARARFWRSCVDGLRCLLSDRRVMLLGGVQALFESVLYIFVFLWTPVLDPHGPPLGIVFSSLMAATMAGSTLFRLATSAPYRLQPGHLLCLAILLAFFSFFMLTFSTVPGQPRPRESLLAFLLLELACGLYFPAVSFLQGRVVPVERRAAVLAWFRLPLHLLACLGLLALHGEVSGSGAGEAGSGTRHMFAGCAGMMLAALLAVISLFTVGRNDADLRLEGPKLEGEI.

12 helical membrane-spanning segments follow: residues 1–21, 47–67, 80–100, 131–151, 180–200, 201–221, 276–296, 306–326, 341–361, 371–391, 403–423, and 443–463; these read MFVT…ALEI, LFLK…PYLY, IAIL…VAGW, FMLI…TTTF, WNYG…EWLG, LGPV…AWFV, VMLL…FVFL, PPLG…STLF, LLCL…FSTV, LLAF…VSFL, AVLA…LLAL, and FAGC…LFTV.

The protein belongs to the major facilitator superfamily.

It is found in the cell membrane. Mediates high-affinity intracellular uptake of the rare oligo-element molybdenum. The sequence is that of Molybdate-anion transporter (mfsd5) from Danio rerio (Zebrafish).